Reading from the N-terminus, the 541-residue chain is Glucose-6-phosphate isomerase (541 aa).

The active-site Proton donor is the Glu346. Residues His377 and Lys506 contribute to the active site.

This sequence belongs to the GPI family.

The protein localises to the cytoplasm. The enzyme catalyses alpha-D-glucose 6-phosphate = beta-D-fructose 6-phosphate. The protein operates within carbohydrate biosynthesis; gluconeogenesis. It participates in carbohydrate degradation; glycolysis; D-glyceraldehyde 3-phosphate and glycerone phosphate from D-glucose: step 2/4. Functionally, catalyzes the reversible isomerization of glucose-6-phosphate to fructose-6-phosphate. This is Glucose-6-phosphate isomerase from Rhizobium meliloti (strain 1021) (Ensifer meliloti).